The following is a 2554-amino-acid chain: DnaJ homolog subfamily C GRV2 (2554 aa).

Disordered regions lie at residues 746–766 (DVVD…KRLL) and 810–833 (QRRA…GVDS). The span at 815 to 825 (DSSSEASNPQA) shows a compositional bias: polar residues. 2 coiled-coil regions span residues 925–951 (TRQE…EDIS) and 1518–1546 (RTAS…LKRQ). The J domain maps to 1524–1606 (LNEEISNISK…AQCILYRRYG (83 aa)). Disordered stretches follow at residues 1960–1994 (IEDR…SSEG) and 2339–2366 (SGEV…GQTP). Residues 1966–1977 (SNDTPELQSSVA) show a composition bias toward polar residues. The span at 1982–1994 (IEEHSDHQPSSEG) shows a compositional bias: basic and acidic residues. Residues 2352 to 2366 (VNESTDPSSLPGQTP) show a composition bias toward polar residues.

In terms of tissue distribution, constitutively expressed in roots, hypocotyls, leaves (e.g. vascular tissues), stems, flowers (e.g. petals and stigmas), siliques and pollen.

It is found in the endosome membrane. Required for endosome formation, vacuolar protein sorting and determination of the embryo growth axis. Necessary for the transport of proteins into protein storage vacuoles (PSVs). Participates in vesicle trafficking from the endosome to the central vacuole. Involved in the regulation of shoot phototropism and gravitropism, probably through the positioning of specialized amyloplasts (statoliths) in endodermal cells. The protein is DnaJ homolog subfamily C GRV2 (GRV2) of Arabidopsis thaliana (Mouse-ear cress).